The following is a 207-amino-acid chain: Outer-membrane lipoprotein LolB (207 aa).

The first 21 residues, 1 to 21 (MPIRKVSLLRLIPLASLVLAA), serve as a signal peptide directing secretion. Cys22 is lipidated: N-palmitoyl cysteine. Residue Cys22 is the site of S-diacylglycerol cysteine attachment.

The protein belongs to the LolB family. As to quaternary structure, monomer.

Its subcellular location is the cell outer membrane. Functionally, plays a critical role in the incorporation of lipoproteins in the outer membrane after they are released by the LolA protein. This Serratia proteamaculans (strain 568) protein is Outer-membrane lipoprotein LolB.